We begin with the raw amino-acid sequence, 124 residues long: Fluoride-specific ion channel FluC (124 aa).

Helical transmembrane passes span 3–23 (IIAIAVGAAIGANLRYSLSIW), 34–54 (YGTLIVNVIGSFAIGFVLVLA), 66–86 (LLIVTGLLGGFTTFSSLSFET), and 100–120 (LYVLSSFGLGIAGVFLGAGVA). Na(+) contacts are provided by glycine 74 and threonine 77.

It belongs to the fluoride channel Fluc/FEX (TC 1.A.43) family.

The protein resides in the cell membrane. It catalyses the reaction fluoride(in) = fluoride(out). Na(+) is not transported, but it plays an essential structural role and its presence is essential for fluoride channel function. Fluoride-specific ion channel. Important for reducing fluoride concentration in the cell, thus reducing its toxicity. This is Fluoride-specific ion channel FluC from Roseiflexus sp. (strain RS-1).